A 339-amino-acid chain; its full sequence is Probable geranylgeranyl transferase type-2 subunit beta (339 aa).

PFTB repeat units follow at residues 24 to 65 (IDKH…YLLK), 72 to 113 (KNEV…IQYD), 120 to 161 (INSV…SLLK), 168 to 209 (CEKA…SILN), 216 to 257 (IDKL…SAID), and 264 to 306 (NDKL…SLMG). Residues 194–196 (HAG) and 236–248 (RPEKSSDVCYSWW) contribute to the geranylgeranyl diphosphate site. 3 residues coordinate Zn(2+): Asp-242, Cys-244, and His-294.

It belongs to the protein prenyltransferase subunit beta family. In terms of assembly, heterodimer of an alpha and a beta subunit. Zn(2+) serves as cofactor.

The enzyme catalyses geranylgeranyl diphosphate + L-cysteinyl-[protein] = S-geranylgeranyl-L-cysteinyl-[protein] + diphosphate. Catalyzes the transfer of a geranyl-geranyl moiety from geranyl-geranyl pyrophosphate to both cysteines in Rab proteins with an -XXCC, -XCXC and -CCXX C-terminal. This Dictyostelium discoideum (Social amoeba) protein is Probable geranylgeranyl transferase type-2 subunit beta (rabggtb).